The sequence spans 284 residues: Phosphatidylserine decarboxylase proenzyme (284 aa).

Active-site charge relay system; for autoendoproteolytic cleavage activity residues include aspartate 88, histidine 145, and serine 248. The Schiff-base intermediate with substrate; via pyruvic acid; for decarboxylase activity role is filled by serine 248. The residue at position 248 (serine 248) is a Pyruvic acid (Ser); by autocatalysis.

This sequence belongs to the phosphatidylserine decarboxylase family. PSD-B subfamily. Prokaryotic type I sub-subfamily. In terms of assembly, heterodimer of a large membrane-associated beta subunit and a small pyruvoyl-containing alpha subunit. Requires pyruvate as cofactor. In terms of processing, is synthesized initially as an inactive proenzyme. Formation of the active enzyme involves a self-maturation process in which the active site pyruvoyl group is generated from an internal serine residue via an autocatalytic post-translational modification. Two non-identical subunits are generated from the proenzyme in this reaction, and the pyruvate is formed at the N-terminus of the alpha chain, which is derived from the carboxyl end of the proenzyme. The autoendoproteolytic cleavage occurs by a canonical serine protease mechanism, in which the side chain hydroxyl group of the serine supplies its oxygen atom to form the C-terminus of the beta chain, while the remainder of the serine residue undergoes an oxidative deamination to produce ammonia and the pyruvoyl prosthetic group on the alpha chain. During this reaction, the Ser that is part of the protease active site of the proenzyme becomes the pyruvoyl prosthetic group, which constitutes an essential element of the active site of the mature decarboxylase.

It localises to the cell membrane. It carries out the reaction a 1,2-diacyl-sn-glycero-3-phospho-L-serine + H(+) = a 1,2-diacyl-sn-glycero-3-phosphoethanolamine + CO2. The protein operates within phospholipid metabolism; phosphatidylethanolamine biosynthesis; phosphatidylethanolamine from CDP-diacylglycerol: step 2/2. In terms of biological role, catalyzes the formation of phosphatidylethanolamine (PtdEtn) from phosphatidylserine (PtdSer). The chain is Phosphatidylserine decarboxylase proenzyme from Delftia acidovorans (strain DSM 14801 / SPH-1).